The sequence spans 700 residues: MARTTPIERYRNIGISAHIDAGKTTTTERILFYTGVSHKIGEVHDGAATMDWMEQEQERGITITSAATTAFWSGMSQQFPQHRINVIDTPGHVDFTVEVERSMRVLDGAVMVYCAVGGVQPQSETVWRQANKYEVPRIAFVNKMDRTGANFLRVVEQLKTRLGANAIPLQLPVGAEENFTGVVDLIKMKAINWNEADQGMTFTYEEVPANMQADCEEWRQNLVEAAAEASEELMEKYLGGEDLTEEEIKSALRQRVLANEIILVTCGSAFKNKGVQAMLDAVVEYLPAPTDIPAIKGINPDETEGERHASDEEPFSSLAFKIATDPFVGNLTFFRVYSGVINSGDTVLNSVRQKRERFGRIVQMHANKREEIKEVRAGDIAAAIGLKDVTTGDTLCAIDAPIILERMEFPEPVISVAVEPKTKADQEKMGLALGRLAQEDPSFRVHTDEESGETIISGMGELHLDIIVDRMKREFKVEANIGKPQVSYRETIRTRVNDVEGKHAKQSGGRGQYGHVVIDLYPLDPEGPGYEFVNEIKGGVIPGEYIPAVDKGIQEQLKSGPLAGYPVVDLGVRLHFGSYHDVDSSELAFKLAASLAFKAAFSKANPVLLEPIMKVEVETPPEYVGDVIGDLSRRRAMVNGQEANEFVVKIDAEVPLSEMFGYATDLRSQTQGRASYSMEPLKYAEAPTSVAAAVIEARKK.

A tr-type G domain is found at 8 to 290 (ERYRNIGISA…AVVEYLPAPT (283 aa)). Residues 17–24 (AHIDAGKT), 88–92 (DTPGH), and 142–145 (NKMD) each bind GTP.

The protein belongs to the TRAFAC class translation factor GTPase superfamily. Classic translation factor GTPase family. EF-G/EF-2 subfamily.

It localises to the cytoplasm. In terms of biological role, catalyzes the GTP-dependent ribosomal translocation step during translation elongation. During this step, the ribosome changes from the pre-translocational (PRE) to the post-translocational (POST) state as the newly formed A-site-bound peptidyl-tRNA and P-site-bound deacylated tRNA move to the P and E sites, respectively. Catalyzes the coordinated movement of the two tRNA molecules, the mRNA and conformational changes in the ribosome. The polypeptide is Elongation factor G (Haemophilus influenzae (strain PittEE)).